The chain runs to 178 residues: dCTP deaminase, dUMP-forming (178 aa).

DCTP is bound by residues 96 to 101 (RSSLGR), Asp-113, 121 to 123 (TLE), Gln-142, Tyr-156, and Gln-163. Residue Glu-123 is the Proton donor/acceptor of the active site.

The protein belongs to the dCTP deaminase family. Homotrimer.

It catalyses the reaction dCTP + 2 H2O = dUMP + NH4(+) + diphosphate. The protein operates within pyrimidine metabolism; dUMP biosynthesis; dUMP from dCTP: step 1/1. In terms of biological role, bifunctional enzyme that catalyzes both the deamination of dCTP to dUTP and the hydrolysis of dUTP to dUMP without releasing the toxic dUTP intermediate. In Acetivibrio thermocellus (strain ATCC 27405 / DSM 1237 / JCM 9322 / NBRC 103400 / NCIMB 10682 / NRRL B-4536 / VPI 7372) (Clostridium thermocellum), this protein is dCTP deaminase, dUMP-forming.